The chain runs to 193 residues: Probable type II restriction enzyme HpyAORF263P (193 aa).

This sequence belongs to the BsaWI type II restriction endonuclease family.

The enzyme catalyses Endonucleolytic cleavage of DNA to give specific double-stranded fragments with terminal 5'-phosphates.. A P subtype probable restriction enzyme that recognizes the double-stranded sequence CCGG; the cleavage site is unknown. This Helicobacter pylori (strain ATCC 700392 / 26695) (Campylobacter pylori) protein is Probable type II restriction enzyme HpyAORF263P.